The primary structure comprises 428 residues: tRNA(Ile)-lysidine synthase (428 aa).

S28–S33 lines the ATP pocket.

The protein belongs to the tRNA(Ile)-lysidine synthase family.

It localises to the cytoplasm. The enzyme catalyses cytidine(34) in tRNA(Ile2) + L-lysine + ATP = lysidine(34) in tRNA(Ile2) + AMP + diphosphate + H(+). In terms of biological role, ligates lysine onto the cytidine present at position 34 of the AUA codon-specific tRNA(Ile) that contains the anticodon CAU, in an ATP-dependent manner. Cytidine is converted to lysidine, thus changing the amino acid specificity of the tRNA from methionine to isoleucine. This chain is tRNA(Ile)-lysidine synthase, found in Streptococcus pyogenes serotype M18 (strain MGAS8232).